The following is a 146-amino-acid chain: Ribonuclease H (146 aa).

An RNase H type-1 domain is found at 1–143; that stretch reads MKKQVTIYTD…CDQLAREAIK (143 aa). Residues Asp10, Glu48, Asp70, and Asp135 each coordinate Mg(2+).

This sequence belongs to the RNase H family. Monomer. Requires Mg(2+) as cofactor.

It is found in the cytoplasm. The catalysed reaction is Endonucleolytic cleavage to 5'-phosphomonoester.. Its function is as follows. Endonuclease that specifically degrades the RNA of RNA-DNA hybrids. The protein is Ribonuclease H of Chlorobium chlorochromatii (strain CaD3).